A 132-amino-acid polypeptide reads, in one-letter code: UPF0102 protein Acel_1550 (132 aa).

Belongs to the UPF0102 family.

This Acidothermus cellulolyticus (strain ATCC 43068 / DSM 8971 / 11B) protein is UPF0102 protein Acel_1550.